We begin with the raw amino-acid sequence, 310 residues long: HTH-type transcriptional activator TtdR (310 aa).

In terms of domain architecture, HTH lysR-type spans proline 6–threonine 63. The H-T-H motif DNA-binding region spans phenylalanine 23–glutamine 42.

The protein belongs to the LysR transcriptional regulatory family.

Functionally, positive regulator required for L-tartrate-dependent anaerobic growth on glycerol. Induces expression of the ttdA-ttdB-ygjE operon. This Escherichia coli (strain K12) protein is HTH-type transcriptional activator TtdR (ttdR).